A 625-amino-acid polypeptide reads, in one-letter code: Glucokinase regulatory protein (625 aa).

SIS domains follow at residues 90–286 and 320–499; these read VQEV…QGIA and VSTS…LLGK. Beta-D-fructose 1-phosphate contacts are provided by residues 109 to 110, glutamate 153, and 179 to 181; these read TS and SVG. A beta-D-fructose 6-phosphate-binding site is contributed by 109–110; sequence TS. 179–181 serves as a coordination point for beta-D-fructose 6-phosphate; that stretch reads SVG. Residues 199 to 200 form an important for interaction with GCK region; sequence AV. Glutamate 348 contributes to the beta-D-fructose 1-phosphate binding site. The interval 463–465 is essential for interaction with GCK; it reads LLF. Position 514 (lysine 514) interacts with beta-D-fructose 1-phosphate. A beta-D-fructose 6-phosphate-binding site is contributed by lysine 514.

The protein belongs to the GCKR family. Interacts (fructose 6-phosphate bound form) with GCK. As to expression, found in liver and pancreas. Not detected in muscle, brain, heart, thymus, intestine, uterus, adipose tissue, kidney, adrenal, lung or spleen.

The protein resides in the cytoplasm. It localises to the nucleus. The protein localises to the mitochondrion. Its function is as follows. Regulates glucokinase (GCK) by forming an inactive complex with this enzyme. Acts by promoting GCK recruitment to the nucleus, possibly to provide a reserve of GCK that can be quickly released in the cytoplasm after a meal. The affinity of GCKR for GCK is modulated by fructose metabolites: GCKR with bound fructose 6-phosphate has increased affinity for GCK, while GCKR with bound fructose 1-phosphate has strongly decreased affinity for GCK and does not inhibit GCK activity. The chain is Glucokinase regulatory protein from Homo sapiens (Human).